The primary structure comprises 568 residues: Proline--tRNA ligase (568 aa).

This sequence belongs to the class-II aminoacyl-tRNA synthetase family. ProS type 1 subfamily. Homodimer.

The protein localises to the cytoplasm. It carries out the reaction tRNA(Pro) + L-proline + ATP = L-prolyl-tRNA(Pro) + AMP + diphosphate. In terms of biological role, catalyzes the attachment of proline to tRNA(Pro) in a two-step reaction: proline is first activated by ATP to form Pro-AMP and then transferred to the acceptor end of tRNA(Pro). As ProRS can inadvertently accommodate and process non-cognate amino acids such as alanine and cysteine, to avoid such errors it has two additional distinct editing activities against alanine. One activity is designated as 'pretransfer' editing and involves the tRNA(Pro)-independent hydrolysis of activated Ala-AMP. The other activity is designated 'posttransfer' editing and involves deacylation of mischarged Ala-tRNA(Pro). The misacylated Cys-tRNA(Pro) is not edited by ProRS. This chain is Proline--tRNA ligase, found in Halothermothrix orenii (strain H 168 / OCM 544 / DSM 9562).